The chain runs to 175 residues: Peptidyl-prolyl cis-trans isomerase B (175 aa).

The PPIase cyclophilin-type domain maps to 3-172; it reads EQLYATLKTN…EDVVIESVVV (170 aa).

This sequence belongs to the cyclophilin-type PPIase family.

The protein resides in the cytoplasm. The enzyme catalyses [protein]-peptidylproline (omega=180) = [protein]-peptidylproline (omega=0). Inhibited by cyclosporin A (CsA). In terms of biological role, PPIases accelerate the folding of proteins. It catalyzes the cis-trans isomerization of proline imidic peptide bonds in oligopeptides. This is Peptidyl-prolyl cis-trans isomerase B (cypB) from Streptomyces anulatus (Streptomyces chrysomallus).